We begin with the raw amino-acid sequence, 190 residues long: Protein LZIC (190 aa).

The stretch at 2 to 63 forms a coiled coil; that stretch reads ASRGKTETSK…SEFNDSLKKI (62 aa).

Belongs to the CTNNBIP1 family. Does not interact with CTNNB1.

In Mus musculus (Mouse), this protein is Protein LZIC (Lzic).